The sequence spans 1513 residues: Exo-beta-1,6-galactobiohydrolase (1513 aa).

Positions 1-31 (MRVLSKSLAAMVAAATLVGGGAFAVAGTAYA) are cleaved as a signal peptide. The Ricin B-type lectin domain maps to 666–801 (VADTTSGDSA…PSANQTWTLR (136 aa)). F5/8 type C domains lie at 965–1112 (AIYV…AFVT) and 1116–1273 (GAAK…VFAQ). The interval 1456-1480 (VAPGPEEQKPGNTNKPGATGNGNKN) is disordered. The span at 1465 to 1480 (PGNTNKPGATGNGNKN) shows a compositional bias: polar residues. Residues 1489 to 1509 (VAAIAGAVALLAAAAGALFML) traverse the membrane as a helical segment.

This sequence belongs to the glycosyl hydrolase 30 family.

Its subcellular location is the cell membrane. It catalyses the reaction Hydrolysis of (1-&gt;6)-beta-D-galactosidic linkages in arabinogalactan proteins and (1-&gt;3):(1-&gt;6)-beta-galactans to yield (1-&gt;6)-beta-galactobiose as the final product.. Its function is as follows. Involved in the type II arabinogalactan (AG) side chains degradation. Specifically releases the non-reducing terminal beta-1,6-galactobiose (beta-1,6-Gal2) from both dearabinosylated larch AG and polymeric beta-1,6-galactan chains by an exo-mode of action. Shows lower activity with larch AG, and very weak activity with dearabinosylated gum arabic, gum arabic and potato galactan. Can probably release beta-1,6-Gal2 from the internal side chains of type II AG. The sequence is that of Exo-beta-1,6-galactobiohydrolase from Bifidobacterium longum subsp. longum (strain ATCC 15707 / DSM 20219 / JCM 1217 / NCTC 11818 / E194b).